Consider the following 374-residue polypeptide: Chaperone protein DnaJ (374 aa).

A J domain is found at 4–69 (SYYEILEITQ…EKRAIYDRYG (66 aa)). Residues 136-213 (GCKKNIDFTY…CKGLGYNESK (78 aa)) form a CR-type zinc finger. Cys-149, Cys-152, Cys-165, Cys-168, Cys-187, Cys-190, Cys-201, and Cys-204 together coordinate Zn(2+). CXXCXGXG motif repeat units follow at residues 149–156 (CKTCNGTG), 165–172 (CPKCQGRG), 187–194 (CPDCQGSG), and 201–208 (CNDCKGLG).

Belongs to the DnaJ family. Homodimer. Zn(2+) serves as cofactor.

It localises to the cytoplasm. Functionally, participates actively in the response to hyperosmotic and heat shock by preventing the aggregation of stress-denatured proteins and by disaggregating proteins, also in an autonomous, DnaK-independent fashion. Unfolded proteins bind initially to DnaJ; upon interaction with the DnaJ-bound protein, DnaK hydrolyzes its bound ATP, resulting in the formation of a stable complex. GrpE releases ADP from DnaK; ATP binding to DnaK triggers the release of the substrate protein, thus completing the reaction cycle. Several rounds of ATP-dependent interactions between DnaJ, DnaK and GrpE are required for fully efficient folding. Also involved, together with DnaK and GrpE, in the DNA replication of plasmids through activation of initiation proteins. The polypeptide is Chaperone protein DnaJ (Campylobacter jejuni subsp. doylei (strain ATCC BAA-1458 / RM4099 / 269.97)).